The sequence spans 203 residues: Large ribosomal subunit protein uL6 (203 aa).

The protein belongs to the universal ribosomal protein uL6 family. In terms of assembly, part of the 50S ribosomal subunit.

In terms of biological role, this protein binds to the 23S rRNA, and is important in its secondary structure. It is located near the subunit interface in the base of the L7/L12 stalk, and near the tRNA binding site of the peptidyltransferase center. The sequence is that of Large ribosomal subunit protein uL6 from Hyphomonas neptunium (strain ATCC 15444).